The primary structure comprises 211 residues: Nucleoside triphosphate pyrophosphatase (211 aa).

Asp-75 functions as the Proton acceptor in the catalytic mechanism.

It belongs to the Maf family. Requires a divalent metal cation as cofactor.

The protein localises to the cytoplasm. It catalyses the reaction a ribonucleoside 5'-triphosphate + H2O = a ribonucleoside 5'-phosphate + diphosphate + H(+). The catalysed reaction is a 2'-deoxyribonucleoside 5'-triphosphate + H2O = a 2'-deoxyribonucleoside 5'-phosphate + diphosphate + H(+). Nucleoside triphosphate pyrophosphatase. May have a dual role in cell division arrest and in preventing the incorporation of modified nucleotides into cellular nucleic acids. The sequence is that of Nucleoside triphosphate pyrophosphatase from Prochlorococcus marinus (strain NATL2A).